We begin with the raw amino-acid sequence, 159 residues long: Insertion element IS136 uncharacterized 16.9 kDa protein (159 aa).

A compositionally biased stretch (low complexity) spans 126–142 (RSFVSPSSSTPSTARSS). The interval 126–159 (RSFVSPSSSTPSTARSSPGRPLPMQAFPAQTCAT) is disordered.

The protein is Insertion element IS136 uncharacterized 16.9 kDa protein of Agrobacterium tumefaciens (strain T37).